A 325-amino-acid chain; its full sequence is Malate dehydrogenase (325 aa).

11-17 (GAAGHVS) provides a ligand contact to NAD(+). The substrate site is built by R92 and R98. NAD(+)-binding positions include N105, Q112, and 129–131 (VGN). Substrate-binding residues include N131 and R162. The Proton acceptor role is filled by H187.

It belongs to the LDH/MDH superfamily. MDH type 2 family.

The catalysed reaction is (S)-malate + NAD(+) = oxaloacetate + NADH + H(+). In terms of biological role, catalyzes the reversible oxidation of malate to oxaloacetate. The polypeptide is Malate dehydrogenase (Desulfotalea psychrophila (strain LSv54 / DSM 12343)).